The sequence spans 46 residues: Denclatoxin-B (46 aa).

Intrachain disulfides connect C3/C40, C4/C32, and C16/C26.

It belongs to the plant thionin (TC 1.C.44) family.

The protein localises to the secreted. In terms of biological role, thionins are small plant proteins which are toxic to animal cells. They seem to exert their toxic effect at the level of the cell membrane. Their precise function is not known. In Dendrophthora clavata (Columbian mistletoe), this protein is Denclatoxin-B.